Consider the following 294-residue polypeptide: Protease HtpX homolog 2 (294 aa).

The next 2 helical transmembrane spans lie at 15-35 (MLFT…FLSY) and 37-57 (GTPP…QYFY). His-140 is a binding site for Zn(2+). Glu-141 is an active-site residue. His-144 contacts Zn(2+). 2 helical membrane-spanning segments follow: residues 151 to 171 (AVLT…RYSL) and 185 to 205 (GGIL…FLLI). Residue Glu-213 coordinates Zn(2+).

Belongs to the peptidase M48B family. It depends on Zn(2+) as a cofactor.

The protein localises to the cell membrane. This Methanosarcina acetivorans (strain ATCC 35395 / DSM 2834 / JCM 12185 / C2A) protein is Protease HtpX homolog 2.